A 341-amino-acid polypeptide reads, in one-letter code: Golgi-associated RAB2 interactor protein 1B (341 aa).

It belongs to the GARIN family. Expressed in testis (at protein level).

It is found in the golgi apparatus. RAB2B effector protein required for accurate acrosome formation and normal male fertility. In complex with RAB2A/RAB2B, seems to suppress excessive vesicle trafficking during acrosome formation. The chain is Golgi-associated RAB2 interactor protein 1B from Mus musculus (Mouse).